A 346-amino-acid chain; its full sequence is 3-dehydroquinate synthase (346 aa).

Residues 62–67, 96–100, 120–121, lysine 133, and lysine 142 each bind NAD(+); these read DGEQYK, GVISD, and TT. 3 residues coordinate Zn(2+): glutamate 175, histidine 234, and histidine 251.

This sequence belongs to the sugar phosphate cyclases superfamily. Dehydroquinate synthase family. It depends on Co(2+) as a cofactor. Requires Zn(2+) as cofactor. NAD(+) serves as cofactor.

Its subcellular location is the cytoplasm. The enzyme catalyses 7-phospho-2-dehydro-3-deoxy-D-arabino-heptonate = 3-dehydroquinate + phosphate. Its pathway is metabolic intermediate biosynthesis; chorismate biosynthesis; chorismate from D-erythrose 4-phosphate and phosphoenolpyruvate: step 2/7. In terms of biological role, catalyzes the conversion of 3-deoxy-D-arabino-heptulosonate 7-phosphate (DAHP) to dehydroquinate (DHQ). The polypeptide is 3-dehydroquinate synthase (Campylobacter fetus subsp. fetus (strain 82-40)).